The chain runs to 338 residues: Microtubule-associated protein RP/EB family member 2 (338 aa).

Residues 1–21 form a disordered region; that stretch reads MPGPTQALSPNGENNNDIIQD. Residues 57 to 159 enclose the Calponin-homology (CH) domain; that stretch reads TMSRHDIIAW…FIQWFKKFFD (103 aa). 2 disordered regions span residues 171-241 and 300-338; these read EARQ…KDLE and SEEHESHTEEHEGEEQVHEQPSSRRSTDSRSVSDNFHFV. Residues 200-234 show a composition bias toward low complexity; sequence SPTAGAAKSSPASKPGSTPSRPSSAKKAAPSSSAS. The EB1 C-terminal domain occupies 236–306; sequence SDKDLETQVI…LYASEEHESH (71 aa). Basic and acidic residues predominate over residues 300-327; the sequence is SEEHESHTEEHEGEEQVHEQPSSRRSTD. The segment covering 328 to 338 has biased composition (low complexity); sequence SRSVSDNFHFV.

It belongs to the MAPRE family.

It is found in the cytoplasm. The protein localises to the cytoskeleton. Its function is as follows. May be involved in microtubule polymerization, and spindle function by stabilizing microtubules and anchoring them at centrosomes. The sequence is that of Microtubule-associated protein RP/EB family member 2 (MAPRE2) from Gallus gallus (Chicken).